The primary structure comprises 53 residues: Bowman-Birk type proteinase inhibitor 1 (53 aa).

5 cysteine pairs are disulfide-bonded: C9/C24, C12/C51, C14/C22, C31/C38, and C40/C48.

In terms of assembly, dimer.

Functionally, inhibits trypsin (IC(50)=6.20 nM), neutrophil elastase (ELANE) and, to a lesser extent, alpha-chymotrypsin (IC(50)=3.44 uM). The polypeptide is Bowman-Birk type proteinase inhibitor 1 (Lathyrus sativus (White vetchling)).